The chain runs to 650 residues: Acetyl-coenzyme A synthetase (650 aa).

CoA-binding positions include 189–192, Thr307, and Asn331; that span reads RGGK. Residues 383-385, 407-412, Asp496, and Arg511 each bind ATP; these read GEP and DTWWQT. Residue Ser519 coordinates CoA. Arg522 is an ATP binding site. The Mg(2+) site is built by Val533, His535, and Val538. Residue Arg580 coordinates CoA. N6-acetyllysine is present on Lys605.

The protein belongs to the ATP-dependent AMP-binding enzyme family. Mg(2+) serves as cofactor. In terms of processing, acetylated. Deacetylation by the SIR2-homolog deacetylase activates the enzyme.

The catalysed reaction is acetate + ATP + CoA = acetyl-CoA + AMP + diphosphate. In terms of biological role, catalyzes the conversion of acetate into acetyl-CoA (AcCoA), an essential intermediate at the junction of anabolic and catabolic pathways. AcsA undergoes a two-step reaction. In the first half reaction, AcsA combines acetate with ATP to form acetyl-adenylate (AcAMP) intermediate. In the second half reaction, it can then transfer the acetyl group from AcAMP to the sulfhydryl group of CoA, forming the product AcCoA. This chain is Acetyl-coenzyme A synthetase, found in Syntrophobacter fumaroxidans (strain DSM 10017 / MPOB).